Here is a 592-residue protein sequence, read N- to C-terminus: Arginine--tRNA ligase (592 aa).

Positions 139–149 (ANPNGPLHIGH) match the 'HIGH' region motif.

This sequence belongs to the class-I aminoacyl-tRNA synthetase family.

Its subcellular location is the cytoplasm. It carries out the reaction tRNA(Arg) + L-arginine + ATP = L-arginyl-tRNA(Arg) + AMP + diphosphate. This is Arginine--tRNA ligase from Methanopyrus kandleri (strain AV19 / DSM 6324 / JCM 9639 / NBRC 100938).